The chain runs to 150 residues: Large ribosomal subunit protein bL9 (150 aa).

It belongs to the bacterial ribosomal protein bL9 family.

Binds to the 23S rRNA. This Streptococcus pyogenes serotype M18 (strain MGAS8232) protein is Large ribosomal subunit protein bL9.